A 380-amino-acid polypeptide reads, in one-letter code: Asporin (380 aa).

The signal sequence occupies residues 1-14 (MKEYVLLLFLALCS). A propeptide spanning residues 15 to 32 (AKPFFSPSHIALKNMMLK) is cleaved from the precursor. A compositionally biased stretch (acidic residues) spans 35 to 54 (EDTDDDDDDDDDDDDDDEDN). A disordered region spans residues 35–59 (EDTDDDDDDDDDDDDDDEDNSLFPT). The O-linked (GalNAc...) serine glycan is linked to serine 55. An LRRNT domain is found at 66–102 (FFPFDLFPMCPFGCQCYSRVVHCSDLGLTSVPTNIPF). Disulfide bonds link cysteine 75–cysteine 81 and cysteine 79–cysteine 88. LRR repeat units lie at residues 103 to 124 (DTRM…DFKG), 127 to 148 (SLYG…AFLT), 151 to 173 (KLRR…PKSL), 174 to 193 (AELR…TFKG), 196 to 219 (ALHV…AFEG), 242 to 263 (TLLE…DFKR), 266 to 287 (ELQR…SLAN), 290 to 312 (RVRE…PELK), 313 to 334 (YLQI…DFCP), 335 to 357 (TVPK…VKYW), and 358 to 380 (EMQP…NFGM). The interval 166–212 (PLNLPKSLAELRIHENKVKKIQKDTFKGMNALHVLEMSANPLDNNGI) is interaction with TGFB1. Residue asparagine 282 is glycosylated (N-linked (GlcNAc...) asparagine). Cysteine 333 and cysteine 366 are joined by a disulfide.

This sequence belongs to the small leucine-rich proteoglycan (SLRP) family. SLRP class I subfamily. In terms of assembly, interacts with TGFB1, TGFB2 and TGFB3. DCN, BGN, and FMOD inhibit binding to TGFB1. Interacts with BMP2. Interacts in vitro with type II collagen. Interacts with type I collagen. DCN can inhibit collagen binding. In terms of processing, there is no serine/glycine dipeptide sequence expected for the attachment of O-linked glycosaminoglycans and this is probably not a proteoglycan. The O-linked polysaccharide on 54-Ser is probably the mucin type linked to GalNAc. Post-translationally, the N-linked glycan at Asn-282 is composed of variable structures of GlcNAc, mannose, fucose, HexNAc and hexose. As to expression, higher levels in osteoarthritic articular cartilage, aorta, uterus. Moderate expression in small intestine, heart, liver, bladder, ovary, stomach, and in the adrenal, thyroid, and mammary glands. Low expression in trachea, bone marrow, and lung. Colocalizes with TGFB1 in chondrocytes within osteoarthritic (OA) lesions of articular cartilage.

Its subcellular location is the secreted. The protein localises to the extracellular space. It is found in the extracellular matrix. Functionally, negatively regulates periodontal ligament (PDL) differentiation and mineralization to ensure that the PDL is not ossified and to maintain homeostasis of the tooth-supporting system. Inhibits BMP2-induced cytodifferentiation of PDL cells by preventing its binding to BMPR1B/BMP type-1B receptor, resulting in inhibition of BMP-dependent activation of SMAD proteins. Critical regulator of TGF-beta in articular cartilage and plays an essential role in cartilage homeostasis and osteoarthritis (OA) pathogenesis. Negatively regulates chondrogenesis in the articular cartilage by blocking the TGF-beta/receptor interaction on the cell surface and inhibiting the canonical TGF-beta/Smad signal. Binds calcium and plays a role in osteoblast-driven collagen biomineralization activity. The polypeptide is Asporin (ASPN) (Homo sapiens (Human)).